The primary structure comprises 282 residues: MGKVLDGKTFANLLGQNLKEKVKKLKDEGITPHFCVINIGDDPASKIYVRTKKRRAEKMGIIQDIYQMSADTKQEEAIALIDKLNADPAINGLMVQLPAPKQIDTDALIERIDPNKDADGLTPANIGHLWMDKHFVEPATAEGIIALLKHYEIPLEGKNVVIIGRSNIVGKPLAALMLEQNATVTIAHSRTKNLGEITKKADVLVSATGQAFLVKADMVKDGAVVVDVGMNHVDGKLVGDVDFDNVKEKASYITPVPGGVGPLTVQFLMEAVVKLTRRQNDR.

Residues 164-166 (GRS) and serine 189 each bind NADP(+).

This sequence belongs to the tetrahydrofolate dehydrogenase/cyclohydrolase family. Homodimer.

It catalyses the reaction (6R)-5,10-methylene-5,6,7,8-tetrahydrofolate + NADP(+) = (6R)-5,10-methenyltetrahydrofolate + NADPH. The enzyme catalyses (6R)-5,10-methenyltetrahydrofolate + H2O = (6R)-10-formyltetrahydrofolate + H(+). The protein operates within one-carbon metabolism; tetrahydrofolate interconversion. Its function is as follows. Catalyzes the oxidation of 5,10-methylenetetrahydrofolate to 5,10-methenyltetrahydrofolate and then the hydrolysis of 5,10-methenyltetrahydrofolate to 10-formyltetrahydrofolate. The sequence is that of Bifunctional protein FolD from Lactobacillus helveticus (strain DPC 4571).